A 795-amino-acid chain; its full sequence is Volume-regulated anion channel subunit LRRC8E (795 aa).

Over 1–22 (MIPVAEFKQFTEQQPAFKVLKP) the chain is Cytoplasmic. Residues 23–43 (WWDVLAEYLTVAMLMIGVFGC) traverse the membrane as a helical segment. At 44–116 (TLQVTQDKII…YETALHWYAK (73 aa)) the chain is on the extracellular side. C54 and C300 are disulfide-bonded. N63 carries an N-linked (GlcNAc...) asparagine glycan. The chain crosses the membrane as a helical span at residues 117–137 (YFPYLVVIHTLIFMVCTSFWF). Topologically, residues 138 to 264 (KFPGTSSKIE…IRQTVLKVCK (127 aa)) are cytoplasmic. The helical transmembrane segment at 265-285 (FFAILVYNLIYVEKISFLVAC) threads the bilayer. The Extracellular portion of the chain corresponds to 286–312 (RVETSEITGYASFCCNHTKAHLFSKLA). An N-linked (GlcNAc...) asparagine glycan is attached at N301. The chain crosses the membrane as a helical span at residues 313-333 (FCYISFVCVYGITCLYTLYWL). The Cytoplasmic portion of the chain corresponds to 334–795 (FHRPLKEYSF…AEVREKMEEE (462 aa)). LRR repeat units lie at residues 535-556 (QLKV…TDVA), 558-578 (HLQR…NSLK), 582-603 (VLRE…IFSL), 605-626 (ALQE…LSFQ), 630-651 (KLVT…VRKL), 653-674 (SLEQ…LGQC), 676-697 (GLRL…LGLL), 699-720 (SLQH…LFFC), 722-744 (KLRT…AALQ), and 745-766 (ALSR…LGDC).

It belongs to the LRRC8 family. As to quaternary structure, heterohexamer; oligomerizes with other LRRC8 proteins (LRRC8A, LRRC8C, LRRC8D and/or LRRC8B) to form a heterohexamer. In vivo, the subunit composition may depend primarily on expression levels, and heterooligomeric channels containing various proportions of the different LRRC8 proteins may coexist.

It is found in the cell membrane. The protein resides in the endoplasmic reticulum membrane. It localises to the lysosome membrane. It carries out the reaction chloride(in) = chloride(out). It catalyses the reaction iodide(out) = iodide(in). The enzyme catalyses taurine(out) = taurine(in). The catalysed reaction is 2',3'-cGAMP(out) = 2',3'-cGAMP(in). In terms of biological role, non-essential component of the volume-regulated anion channel (VRAC, also named VSOAC channel), an anion channel required to maintain a constant cell volume in response to extracellular or intracellular osmotic changes. The VRAC channel conducts iodide better than chloride and can also conduct organic osmolytes like taurine. Mediates efflux of amino acids, such as aspartate, in response to osmotic stress. The VRAC channel also mediates transport of immunoreactive cyclic dinucleotide GMP-AMP (2'-3'-cGAMP), an immune messenger produced in response to DNA virus in the cytosol. Channel activity requires LRRC8A plus at least one other family member (LRRC8B, LRRC8C, LRRC8D or LRRC8E); channel characteristics depend on the precise subunit composition. Also plays a role in lysosome homeostasis by forming functional lysosomal VRAC channels in response to low cytoplasmic ionic strength condition: lysosomal VRAC channels are necessary for the formation of large lysosome-derived vacuoles, which store and then expel excess water to maintain cytosolic water homeostasis. The polypeptide is Volume-regulated anion channel subunit LRRC8E (Mus musculus (Mouse)).